A 423-amino-acid chain; its full sequence is uncharacterized protein (423 aa).

It belongs to the IIV-6 198R family.

This is an uncharacterized protein from Aedes vexans (Inland floodwater mosquito).